The following is a 404-amino-acid chain: Growth/differentiation factor 6-A (404 aa).

Positions 1–24 (MDALRAVAFYALFVFLWSLPCCQS) are cleaved as a signal peptide. Positions 25-284 (AALISQKRSK…LQFKARRRRR (260 aa)) are excised as a propeptide. An N-linked (GlcNAc...) asparagine glycan is attached at asparagine 91. A disordered region spans residues 263–304 (KSRGDDDEEESALQFKARRRRRTALNNRHGKRHGKKSKSRCS). Over residues 278–304 (KARRRRRTALNNRHGKRHGKKSKSRCS) the composition is skewed to basic residues. Cystine bridges form between cysteine 303-cysteine 369, cysteine 332-cysteine 401, and cysteine 336-cysteine 403.

The protein belongs to the TGF-beta family. Homodimer; disulfide-linked. In terms of tissue distribution, first expressed in late gastrula stage embryos (9.5 hours post fertilization (hpf)) in anterior neuroectoderm corresponding to the future dorsal part of the brain. Shortly after tailbud formation (11 hpf), expression expands to the entire neural region and is subsequently expressed in derivatives of the lateral neural plate and migrating neural crest cells, with the future midbrain and hindbrain showing strong expression. Also expressed weakly and transiently in the posterior embryo from 11.5 hpf to 15 hpf in the lateral mesoderm, and in ectoderm above the neural keel. At 14 hpf, expressed along the entire length of the embryo and starting around the 16-somite stage, expressed in the dorsal quadrant of the retina, representing the distal tip of the eye anlage. At this stage, also expressed in the hatching gland and the hypochord. At 24 hpf, expressed in the roof plate outlining the fourth brain ventricle, in the posterior hypochord, the primitive gut endoderm, the ventral tail mesenchyme, the dorsal part of the neural tube and the dorsal fin. Weakly expressed in the dorsal part of the posterior spinal cord and in blood cell precursors.

It is found in the secreted. Functionally, growth factor that controls proliferation and cellular differentiation in the retina. Plays a key role in regulating apoptosis during retinal development. Establishes dorsal-ventral positional information in the retina and controls the formation of the retinotectal map. Functions maternally in dorsal/ventral patterning to induce the expression of the zygotic bmp2b and bmp4 genes and ventralize embryos. Zygotic expression does not appear to regulate axis specification, but instead functions to establish the integrity of the axial vessels during embryonic development. May be involved in maintaining the identity of cells of the dorsal-most neural tube and of at least a subset of neural crest cells. This Danio rerio (Zebrafish) protein is Growth/differentiation factor 6-A (gdf6a).